Here is a 359-residue protein sequence, read N- to C-terminus: Beta-hexosaminidase (359 aa).

Residues D64, R72, R138, and 168 to 169 each bind substrate; that span reads KH. H181 acts as the Proton donor/acceptor in catalysis. Residue D252 is the Nucleophile of the active site.

It belongs to the glycosyl hydrolase 3 family. NagZ subfamily.

Its subcellular location is the cytoplasm. The catalysed reaction is Hydrolysis of terminal non-reducing N-acetyl-D-hexosamine residues in N-acetyl-beta-D-hexosaminides.. Its pathway is cell wall biogenesis; peptidoglycan recycling. In terms of biological role, plays a role in peptidoglycan recycling by cleaving the terminal beta-1,4-linked N-acetylglucosamine (GlcNAc) from peptide-linked peptidoglycan fragments, giving rise to free GlcNAc, anhydro-N-acetylmuramic acid and anhydro-N-acetylmuramic acid-linked peptides. This Thiobacillus denitrificans (strain ATCC 25259 / T1) protein is Beta-hexosaminidase.